Consider the following 384-residue polypeptide: MAKHLFTSESVSEGHPDKIADQISDAVLDAILQQDPKARVACETYVKTGMVLVGGEITTSAWVDIEEITRNTVREIGYVHSDMGFDANSCAVLSAIGKQSPDINQGVDRADPLEQGAGDQGLMFGYATNETDVLMPAPVTYAHRLVQRQAEVRKNGTLPWLRPDAKSQVTFQYDDGKIVGIDAVVLSTQHAEDIDQKSLQEAVMEEIIKPILPSEWLNTSTKFFINPTGRFVIGGPMGDCGLTGRKIIVDTYGGMARHGGGAFSGKDPSKVDRSAAYAARYVAKNIVAAGLADRCEIQVSYAIGVAEPTSIMVETFGTEKVPAEQLILLVREFFDLRPYGLIQMLDLLHPIYKETAAYGHFGRENFPWEKTDKAQLLRDAAGLK.

Residue histidine 15 participates in ATP binding. Aspartate 17 serves as a coordination point for Mg(2+). Glutamate 43 provides a ligand contact to K(+). 2 residues coordinate L-methionine: glutamate 56 and glutamine 99. The flexible loop stretch occupies residues 99 to 109; sequence QSPDINQGVDR. Residues 164–166, 230–231, aspartate 239, 245–246, alanine 262, and lysine 266 contribute to the ATP site; these read DAK, RF, and RK. Aspartate 239 serves as a coordination point for L-methionine. Lysine 270 lines the L-methionine pocket.

Belongs to the AdoMet synthase family. In terms of assembly, homotetramer; dimer of dimers. The cofactor is Mg(2+). K(+) is required as a cofactor.

It is found in the cytoplasm. The enzyme catalyses L-methionine + ATP + H2O = S-adenosyl-L-methionine + phosphate + diphosphate. Its pathway is amino-acid biosynthesis; S-adenosyl-L-methionine biosynthesis; S-adenosyl-L-methionine from L-methionine: step 1/1. In terms of biological role, catalyzes the formation of S-adenosylmethionine (AdoMet) from methionine and ATP. The overall synthetic reaction is composed of two sequential steps, AdoMet formation and the subsequent tripolyphosphate hydrolysis which occurs prior to release of AdoMet from the enzyme. This chain is S-adenosylmethionine synthase, found in Salmonella agona (strain SL483).